A 119-amino-acid chain; its full sequence is Small ribosomal subunit protein uS13 (119 aa).

Positions 93–119 (RRGLPLRGQRTRSNARTRKGKRKPIRS) are disordered.

Belongs to the universal ribosomal protein uS13 family. As to quaternary structure, part of the 30S ribosomal subunit. Forms a loose heterodimer with protein S19. Forms two bridges to the 50S subunit in the 70S ribosome.

Functionally, located at the top of the head of the 30S subunit, it contacts several helices of the 16S rRNA. In the 70S ribosome it contacts the 23S rRNA (bridge B1a) and protein L5 of the 50S subunit (bridge B1b), connecting the 2 subunits; these bridges are implicated in subunit movement. Contacts the tRNAs in the A and P-sites. The polypeptide is Small ribosomal subunit protein uS13 (Coxiella burnetii (strain RSA 493 / Nine Mile phase I)).